A 202-amino-acid chain; its full sequence is ER membrane protein complex subunit 7 homolog (202 aa).

An N-terminal signal peptide occupies residues 1–23 (MAPIFRSTSLIAFSLFFFFFAST). The chain crosses the membrane as a helical span at residues 148–168 (IVKSPMGLMVGFMVVVVFLMP). The segment at 179–202 (MKSAQEQMRSQGVPSLTSLLPASR) is disordered. Positions 182-202 (AQEQMRSQGVPSLTSLLPASR) are enriched in polar residues.

This sequence belongs to the EMC7 family.

It localises to the membrane. The sequence is that of ER membrane protein complex subunit 7 homolog from Arabidopsis thaliana (Mouse-ear cress).